The following is a 495-amino-acid chain: Tubulin epsilon and delta complex protein 1 (495 aa).

Residues G355–A387 adopt a coiled-coil conformation. A disordered region spans residues C417–A440. Residues I452–L480 adopt a coiled-coil conformation.

As to quaternary structure, interacts with TEDC2. Found in a complex with TEDC1, TEDC2, TUBE1 and TUBD1.

The protein resides in the cell projection. It is found in the cilium. The protein localises to the cytoplasm. It localises to the cytoskeleton. Its subcellular location is the microtubule organizing center. The protein resides in the centrosome. It is found in the centriole. Acts as a positive regulator of ciliary hedgehog signaling. Required for centriole stability. May play a role in counteracting perturbation of actin filaments, such as after treatment with the actin depolymerizing microbial metabolite Chivosazole F. This chain is Tubulin epsilon and delta complex protein 1, found in Homo sapiens (Human).